The sequence spans 248 residues: DNA repair protein RecO (248 aa).

This sequence belongs to the RecO family.

In terms of biological role, involved in DNA repair and RecF pathway recombination. The protein is DNA repair protein RecO of Bacillus mycoides (strain KBAB4) (Bacillus weihenstephanensis).